The chain runs to 525 residues: MDVFAPTGNLHAGAIWPEVVVTLTLLIVLVVDLVGGSAARKSLPALSLFGLLGALVTLVLQWQQPQLESFLGSFAADPVSILFRGLVVATAALTVMMAERYFLQAGAPTGEFYVLLLTATLGGMFLAGATDLIMVFVSLETLGIASYLMAGYTKRDPRSSEAALKYLLTGASSTAIFLYGMSLLYGLSGGQTQLAAIAPYLANAGLVGILALVFCLGGIGFKLAAVPFHQWTPDVYEGSPTPVVAFLSVGSKAAGFALAIRFLATVFPAMTEEWRAVLSVLAILTMVLGNVVAIAQTRLKRLLAYSSIGQAGFVLIGLVAGTEAGYASLIFYLMVYLAMNLGAFLCVTLFSLKTGTDEINEYSGLYQKDPFLTLCLSICLLSLGGLPPLAGFFGKLYLFWAGWQAGEYTLVLVGLVTSVISIYYYVRVVKTMVVKEPQEMSLSVQNYPPTDWQAEGMPALRVGMVVTLVATIFAGILSNPLFTLSTQAVEQSPFLGFPTAQAFAPGSASPSLAVAGSAALPSRGS.

The next 14 membrane-spanning stretches (helical) occupy residues 14–34, 42–62, 78–98, 117–137, 167–187, 201–221, 240–260, 276–296, 302–322, 330–350, 374–394, 396–416, 462–482, and 494–514; these read AIWPEVVVTLTLLIVLVVDLV, SLPALSLFGLLGALVTLVLQW, PVSILFRGLVVATAALTVMMA, LTATLGGMFLAGATDLIMVFV, LLTGASSTAIFLYGMSLLYGL, LANAGLVGILALVFCLGGIGF, PTPVVAFLSVGSKAAGFALAI, AVLSVLAILTMVLGNVVAIAQ, LLAYSSIGQAGFVLIGLVAGT, IFYLMVYLAMNLGAFLCVTLF, LCLSICLLSLGGLPPLAGFFG, LYLFWAGWQAGEYTLVLVGLV, VGMVVTLVATIFAGILSNPLF, and FLGFPTAQAFAPGSASPSLAV.

It belongs to the complex I subunit 2 family. As to quaternary structure, NDH-1 can be composed of about 15 different subunits; different subcomplexes with different compositions have been identified which probably have different functions.

The protein resides in the cellular thylakoid membrane. It catalyses the reaction a plastoquinone + NADH + (n+1) H(+)(in) = a plastoquinol + NAD(+) + n H(+)(out). The catalysed reaction is a plastoquinone + NADPH + (n+1) H(+)(in) = a plastoquinol + NADP(+) + n H(+)(out). In terms of biological role, NDH-1 shuttles electrons from an unknown electron donor, via FMN and iron-sulfur (Fe-S) centers, to quinones in the respiratory and/or the photosynthetic chain. The immediate electron acceptor for the enzyme in this species is believed to be plastoquinone. Couples the redox reaction to proton translocation, and thus conserves the redox energy in a proton gradient. Cyanobacterial NDH-1 also plays a role in inorganic carbon-concentration. This is NAD(P)H-quinone oxidoreductase subunit 2 from Synechococcus sp. (strain JA-3-3Ab) (Cyanobacteria bacterium Yellowstone A-Prime).